We begin with the raw amino-acid sequence, 614 residues long: V-type proton ATPase catalytic subunit A (614 aa).

247–254 (GAFGCGKT) is an ATP binding site.

It belongs to the ATPase alpha/beta chains family. In terms of assembly, V-ATPase is a heteromultimeric enzyme made up of two complexes: the ATP-hydrolytic V1 complex and the proton translocation V0 complex. The V1 complex consists of three catalytic AB heterodimers that form a heterohexamer, three peripheral stalks each consisting of EG heterodimers, one central rotor including subunits D and F, and the regulatory subunits C and H. The proton translocation complex V0 consists of the proton transport subunit a, a ring of proteolipid subunits c9c'', rotary subunit d, subunits e and f, and the accessory subunits VhaAC45 and ATP6AP2.

It catalyses the reaction ATP + H2O + 4 H(+)(in) = ADP + phosphate + 5 H(+)(out). Its activity is regulated as follows. ATP hydrolysis occurs at the interface between the nucleotide-binding domains of subunits A and B. ATP hydrolysis triggers a conformational change in the subunits D and F, which induces a shift of subunit d. The c-ring is subsequently rotated and results in a continuous proton translocation across the membrane. Its function is as follows. Catalytic subunit of the V1 complex of vacuolar(H+)-ATPase (V-ATPase), a multisubunit enzyme composed of a peripheral complex (V1) that hydrolyzes ATP and a membrane integral complex (V0) that translocates protons. V-ATPase is responsible for acidifying and maintaining the pH of intracellular compartments and in some cell types, is targeted to the plasma membrane, where it is responsible for acidifying the extracellular environment. This is V-type proton ATPase catalytic subunit A (VhaA) from Aedes aegypti (Yellowfever mosquito).